A 96-amino-acid chain; its full sequence is Pyrimidine/purine nucleoside phosphorylase (96 aa).

It belongs to the nucleoside phosphorylase PpnP family.

The enzyme catalyses a purine D-ribonucleoside + phosphate = a purine nucleobase + alpha-D-ribose 1-phosphate. It carries out the reaction adenosine + phosphate = alpha-D-ribose 1-phosphate + adenine. It catalyses the reaction cytidine + phosphate = cytosine + alpha-D-ribose 1-phosphate. The catalysed reaction is guanosine + phosphate = alpha-D-ribose 1-phosphate + guanine. The enzyme catalyses inosine + phosphate = alpha-D-ribose 1-phosphate + hypoxanthine. It carries out the reaction thymidine + phosphate = 2-deoxy-alpha-D-ribose 1-phosphate + thymine. It catalyses the reaction uridine + phosphate = alpha-D-ribose 1-phosphate + uracil. The catalysed reaction is xanthosine + phosphate = alpha-D-ribose 1-phosphate + xanthine. In terms of biological role, catalyzes the phosphorolysis of diverse nucleosides, yielding D-ribose 1-phosphate and the respective free bases. Can use uridine, adenosine, guanosine, cytidine, thymidine, inosine and xanthosine as substrates. Also catalyzes the reverse reactions. The chain is Pyrimidine/purine nucleoside phosphorylase from Serratia proteamaculans (strain 568).